Reading from the N-terminus, the 393-residue chain is MEENNLQCSSVVDGNFEEVPRETAIQFKPPLYRQRYQFVKNLVDQHEPKKVADLGCGDTSLLRLLKVNPCIELLVGVDINEDKLRWRGDSLAPFLGDFLKPRDLNLTITLYHGSVVERDSRLLGFDLITCIELIEHLDSGDLARFPEVVFGYLSPSMIVISTPNSEFNPLFPSVTLRDSDHKFEWTRMEFQTWALYVANRYDYSVEFTGVGEPPAGAENVGYCTQIGIFRKNGGKATESCLSEQHDQHVYKAVFTTSYPSLQQERFFKLVLVNEVSQQVESLRVSHLPRRKEQAGERGDKPKDIGGSKAPVPCFGPVFTEVEKAKIENSPTPFCVGDKFFVPLQRLLAYPKLNRLCANEEMMRSVIADSIPLSSDGSAVVADLRNYFDEQFEF.

Residues tyrosine 36, glycine 55, aspartate 78, lysine 83, valine 115, and isoleucine 131 each contribute to the S-adenosyl-L-methionine site. 4 residues coordinate Mg(2+): glutamate 132, glutamate 135, histidine 136, and histidine 181. The interval 286–307 (HLPRRKEQAGERGDKPKDIGGS) is disordered. Over residues 290 to 305 (RKEQAGERGDKPKDIG) the composition is skewed to basic and acidic residues.

Belongs to the methyltransferase superfamily. HEN1 family. It depends on Mg(2+) as a cofactor.

The protein localises to the cytoplasm. The enzyme catalyses small RNA 3'-end nucleotide + S-adenosyl-L-methionine = small RNA 3'-end 2'-O-methylnucleotide + S-adenosyl-L-homocysteine + H(+). Functionally, methyltransferase that adds a 2'-O-methyl group at the 3'-end of piRNAs, a class of 24 to 30 nucleotide RNAs that are generated by a Dicer-independent mechanism and are primarily derived from transposons and other repeated sequence elements. This probably protects the 3'-end of piRNAs from uridylation activity and subsequent degradation. Stabilization of piRNAs is essential for gametogenesis. The polypeptide is Small RNA 2'-O-methyltransferase (HENMT1) (Homo sapiens (Human)).